Here is a 481-residue protein sequence, read N- to C-terminus: ATP synthase subunit alpha (481 aa).

145-152 (GDRQTGKT) provides a ligand contact to ATP.

Belongs to the ATPase alpha/beta chains family. F-type ATPases have 2 components, CF(1) - the catalytic core - and CF(0) - the membrane proton channel. CF(1) has five subunits: alpha(3), beta(3), gamma(1), delta(1), epsilon(1). CF(0) has three main subunits: a(1), b(2) and c(9-12). The alpha and beta chains form an alternating ring which encloses part of the gamma chain. CF(1) is attached to CF(0) by a central stalk formed by the gamma and epsilon chains, while a peripheral stalk is formed by the delta and b chains.

Its subcellular location is the cell membrane. The catalysed reaction is ATP + H2O + 4 H(+)(in) = ADP + phosphate + 5 H(+)(out). In terms of biological role, produces ATP from ADP in the presence of a proton gradient across the membrane. The alpha chain is a regulatory subunit. This Carsonella ruddii (strain PV) protein is ATP synthase subunit alpha.